The chain runs to 1123 residues: Ubiquitin carboxyl-terminal hydrolase 36 (1123 aa).

Basic and acidic residues-rich tracts occupy residues M1–A19 and G69–Y90. Disordered stretches follow at residues M1–G22 and T67–D95. A USP domain is found at A122–I423. The active-site Nucleophile is C131. Residue H382 is the Proton acceptor of the active site. 2 positions are modified to phosphoserine: S429 and S464. Residues P430–V577 are disordered. Positions R491–G503 are enriched in polar residues. The span at P510–S519 shows a compositional bias: low complexity. At S546 the chain carries Phosphoserine. Low complexity predominate over residues S557–S571. S582 carries the phosphoserine modification. Residues A589–N999 form a disordered region. The span at K597–G609 shows a compositional bias: basic and acidic residues. Positions S610–S623 are enriched in low complexity. Over residues S640–P654 the composition is skewed to polar residues. S667 is modified (phosphoserine). Over residues V669–M681 the composition is skewed to polar residues. At S682 the chain carries Phosphoserine. Positions K687–S697 are enriched in low complexity. Phosphoserine is present on residues S713 and S742. The segment covering E773–P785 has biased composition (polar residues). The segment covering H841–K850 has biased composition (basic residues). The segment covering G891–G902 has biased composition (polar residues). Residue S952 is modified to Phosphoserine. Residues Q963–L975 show a composition bias toward basic and acidic residues.

It belongs to the peptidase C19 family. As to quaternary structure, interacts with isoform 3 of FBXW7; the interaction inhibits MYC degradation induced by SCF(FBW7) complex. Interacts with NTRK1; USP36 does not deubiquitinate NTRK1. Interacts with NEDD4L (via domains WW1, 3 and 4); the interaction inhibits ubiquitination of, at least, NTRK1, KCNQ2 and KCNQ3 by NEDD4L. Interacts (via C-terminus) with EXOSC10 (via C-terminus); the interaction is facilitated by the association with RNA and promotes sumoylation of EXOSC10. In terms of processing, polyubiquitinated by NEDD4L, no effect on USP36 protein levels. Both proteins interact with and regulate each other's ubiquitination levels. Broadly expressed.

It localises to the nucleus. It is found in the nucleolus. Its subcellular location is the cytoplasm. The enzyme catalyses Thiol-dependent hydrolysis of ester, thioester, amide, peptide and isopeptide bonds formed by the C-terminal Gly of ubiquitin (a 76-residue protein attached to proteins as an intracellular targeting signal).. Its function is as follows. Deubiquitinase essential for the regulation of nucleolar structure and function. Required for cell and organism viability. Plays an important role in ribosomal RNA processing and protein synthesis, which is mediated, at least in part, through deubiquitination of DHX33, NPM1 and FBL, regulating their protein stability. Functions as a transcriptional repressor by deubiquiting histone H2B at the promoters of genes critical for cellular differentiation, such as CDKN1A, thereby preventing histone H3 'Lys-4' trimethylation (H3K4). Specifically deubiquitinates MYC in the nucleolus, leading to prevent MYC degradation by the proteasome: acts by specifically interacting with isoform 3 of FBXW7 (FBW7gamma) in the nucleolus and counteracting ubiquitination of MYC by the SCF(FBW7) complex. In contrast, it does not interact with isoform 1 of FBXW7 (FBW7alpha) in the nucleoplasm. Interacts to and regulates the actions of E3 ubiquitin-protein ligase NEDD4L over substrates such as NTRK1, KCNQ2 and KCNQ3, affecting their expression an functions. Deubiquitinates SOD2, regulates SOD2 protein stability. Deubiquitinase activity is required to control selective autophagy activation by ubiquitinated proteins. Promotes CEP63 stabilization through 'Lys-48'-linked deubiquitination leading to increased stability. Acts as a SUMO ligase to promote EXOSC10 sumoylation critical for the nucleolar RNA exosome function in rRNA processing. Binds to pre-rRNAs. The polypeptide is Ubiquitin carboxyl-terminal hydrolase 36 (Homo sapiens (Human)).